Reading from the N-terminus, the 209-residue chain is Pyridoxine/pyridoxamine 5'-phosphate oxidase (209 aa).

Substrate contacts are provided by residues 7-10 (RADY) and Lys-64. FMN contacts are provided by residues 59–64 (RIVLLK), 74–75 (FT), and Lys-81. Residues Tyr-121, Arg-125, and Ser-129 each contribute to the substrate site. Residues 138 to 139 (QS), Trp-182, and Arg-192 each bind FMN.

It belongs to the pyridoxamine 5'-phosphate oxidase family. In terms of assembly, homodimer. Requires FMN as cofactor.

It catalyses the reaction pyridoxamine 5'-phosphate + O2 + H2O = pyridoxal 5'-phosphate + H2O2 + NH4(+). It carries out the reaction pyridoxine 5'-phosphate + O2 = pyridoxal 5'-phosphate + H2O2. It participates in cofactor metabolism; pyridoxal 5'-phosphate salvage; pyridoxal 5'-phosphate from pyridoxamine 5'-phosphate: step 1/1. It functions in the pathway cofactor metabolism; pyridoxal 5'-phosphate salvage; pyridoxal 5'-phosphate from pyridoxine 5'-phosphate: step 1/1. In terms of biological role, catalyzes the oxidation of either pyridoxine 5'-phosphate (PNP) or pyridoxamine 5'-phosphate (PMP) into pyridoxal 5'-phosphate (PLP). This is Pyridoxine/pyridoxamine 5'-phosphate oxidase from Haemophilus ducreyi (strain 35000HP / ATCC 700724).